Reading from the N-terminus, the 309-residue chain is Low-density lipoprotein receptor-related protein 1 (309 aa).

It belongs to the LDLR family.

It is found in the endoplasmic reticulum. It localises to the golgi apparatus. The protein localises to the endosome. Its function is as follows. Involved in endocytosis, fatty acid beta-oxidation and infectious growth. Plays a critical role in the accumulation of MSN2 from the cytosol to the nucleus by activating the cyclic AMP signaling pathway. MSN2 can then target the dienoyl-coenzyme A isomerase DCI1 and other genes involved in fatty acid beta-oxidation, which is important for lipid droplets degradation and infectious growth. This chain is Low-density lipoprotein receptor-related protein 1, found in Pyricularia oryzae (strain 70-15 / ATCC MYA-4617 / FGSC 8958) (Rice blast fungus).